A 363-amino-acid polypeptide reads, in one-letter code: Galactokinase (363 aa).

16-19 (EHTD) lines the substrate pocket. ATP-binding positions include serine 50 and 103 to 109 (GSGLSSS). The Mg(2+) site is built by serine 109 and glutamate 141. The Proton acceptor role is filled by aspartate 153. Residue tyrosine 205 participates in substrate binding.

The protein belongs to the GHMP kinase family. GalK subfamily.

It localises to the cytoplasm. The enzyme catalyses alpha-D-galactose + ATP = alpha-D-galactose 1-phosphate + ADP + H(+). It participates in carbohydrate metabolism; galactose metabolism. In terms of biological role, catalyzes the transfer of the gamma-phosphate of ATP to D-galactose to form alpha-D-galactose-1-phosphate (Gal-1-P). The chain is Galactokinase from Mycobacterium tuberculosis (strain ATCC 25177 / H37Ra).